A 278-amino-acid polypeptide reads, in one-letter code: Probable septum site-determining protein MinC (278 aa).

Belongs to the MinC family. Interacts with MinD and FtsZ.

Its function is as follows. Cell division inhibitor that blocks the formation of polar Z ring septums. Rapidly oscillates between the poles of the cell to destabilize FtsZ filaments that have formed before they mature into polar Z rings. Prevents FtsZ polymerization. In Gloeobacter violaceus (strain ATCC 29082 / PCC 7421), this protein is Probable septum site-determining protein MinC.